The chain runs to 121 residues: Large ribosomal subunit protein bL21c (121 aa).

It belongs to the bacterial ribosomal protein bL21 family. Part of the 50S ribosomal subunit.

Its subcellular location is the plastid. It localises to the chloroplast. Functionally, this protein binds to 23S rRNA. In Chaetosphaeridium globosum (Charophycean green alga), this protein is Large ribosomal subunit protein bL21c.